Consider the following 660-residue polypeptide: UvrABC system protein B (660 aa).

A Helicase ATP-binding domain is found at 27 to 414; sequence NGVNEGKRHQ…TDEMVQQIIR (388 aa). 40–47 is an ATP binding site; that stretch reads GATGTGKT. The short motif at 93 to 116 is the Beta-hairpin element; the sequence is YYDYYQPEAYVPSTDTFIEKDASI. The 163-residue stretch at 431-593 folds into the Helicase C-terminal domain; sequence QIDDLLGEIQ…ITPTTINKKI (163 aa). The segment at 603-622 is disordered; it reads NDETNEQQQTEVPKKMTKKE. The region spanning 624-659 is the UVR domain; sequence EKTIANIEKEMKQAAKDLDFEKATELRDMLFELKAE.

Belongs to the UvrB family. In terms of assembly, forms a heterotetramer with UvrA during the search for lesions. Interacts with UvrC in an incision complex.

It is found in the cytoplasm. Its function is as follows. The UvrABC repair system catalyzes the recognition and processing of DNA lesions. A damage recognition complex composed of 2 UvrA and 2 UvrB subunits scans DNA for abnormalities. Upon binding of the UvrA(2)B(2) complex to a putative damaged site, the DNA wraps around one UvrB monomer. DNA wrap is dependent on ATP binding by UvrB and probably causes local melting of the DNA helix, facilitating insertion of UvrB beta-hairpin between the DNA strands. Then UvrB probes one DNA strand for the presence of a lesion. If a lesion is found the UvrA subunits dissociate and the UvrB-DNA preincision complex is formed. This complex is subsequently bound by UvrC and the second UvrB is released. If no lesion is found, the DNA wraps around the other UvrB subunit that will check the other stand for damage. This Staphylococcus saprophyticus subsp. saprophyticus (strain ATCC 15305 / DSM 20229 / NCIMB 8711 / NCTC 7292 / S-41) protein is UvrABC system protein B.